A 277-amino-acid polypeptide reads, in one-letter code: Large ribosomal subunit protein uL2 (277 aa).

The tract at residues R219–K277 is disordered. A compositionally biased stretch (basic and acidic residues) spans D231 to K241. Positions K256 to K277 are enriched in basic residues.

It belongs to the universal ribosomal protein uL2 family. In terms of assembly, part of the 50S ribosomal subunit. Forms a bridge to the 30S subunit in the 70S ribosome.

Its function is as follows. One of the primary rRNA binding proteins. Required for association of the 30S and 50S subunits to form the 70S ribosome, for tRNA binding and peptide bond formation. It has been suggested to have peptidyltransferase activity; this is somewhat controversial. Makes several contacts with the 16S rRNA in the 70S ribosome. This is Large ribosomal subunit protein uL2 from Campylobacter curvus (strain 525.92).